The following is a 140-amino-acid chain: Small ribosomal subunit protein uS11 (140 aa).

The disordered stretch occupies residues 116 to 140 (GRVEDVTPIPHDGTRPKGGRRGRRV).

This sequence belongs to the universal ribosomal protein uS11 family. As to quaternary structure, part of the 30S ribosomal subunit.

Functionally, located on the platform of the 30S subunit. This Thermococcus kodakarensis (strain ATCC BAA-918 / JCM 12380 / KOD1) (Pyrococcus kodakaraensis (strain KOD1)) protein is Small ribosomal subunit protein uS11.